Here is a 186-residue protein sequence, read N- to C-terminus: NADH dehydrogenase [ubiquinone] 1 beta subcomplex subunit 8, mitochondrial (186 aa).

The N-terminal 28 residues, 1-28, are a transit peptide targeting the mitochondrion; the sequence is MAAARAGVLGVRWLQKAARNVVPLGART. Residues 133–153 form a helical membrane-spanning segment; sequence LFGFVAFMLFMFWVGETYPAY.

It belongs to the complex I NDUFB8 subunit family. In terms of assembly, complex I is composed of 45 different subunits.

It localises to the mitochondrion inner membrane. Functionally, accessory subunit of the mitochondrial membrane respiratory chain NADH dehydrogenase (Complex I), that is believed not to be involved in catalysis. Complex I functions in the transfer of electrons from NADH to the respiratory chain. The immediate electron acceptor for the enzyme is believed to be ubiquinone. The polypeptide is NADH dehydrogenase [ubiquinone] 1 beta subcomplex subunit 8, mitochondrial (NDUFB8) (Bos taurus (Bovine)).